A 206-amino-acid polypeptide reads, in one-letter code: Proteasome subunit beta 1 (206 aa).

Residues Met-1 to Gly-14 constitute a propeptide, removed in mature form; by autocatalysis. Catalysis depends on Thr-15, which acts as the Nucleophile.

The protein belongs to the peptidase T1B family. In terms of assembly, the 20S proteasome core is composed of 14 alpha and 14 beta subunits that assemble into four stacked heptameric rings, resulting in a barrel-shaped structure. The two inner rings, each composed of seven catalytic beta subunits, are sandwiched by two outer rings, each composed of seven alpha subunits. The catalytic chamber with the active sites is on the inside of the barrel. Has a gated structure, the ends of the cylinder being occluded by the N-termini of the alpha-subunits. Is capped at one or both ends by the proteasome regulatory ATPase, PAN.

The protein resides in the cytoplasm. The catalysed reaction is Cleavage of peptide bonds with very broad specificity.. Its activity is regulated as follows. The formation of the proteasomal ATPase PAN-20S proteasome complex, via the docking of the C-termini of PAN into the intersubunit pockets in the alpha-rings, triggers opening of the gate for substrate entry. Interconversion between the open-gate and close-gate conformations leads to a dynamic regulation of the 20S proteasome proteolysis activity. Its function is as follows. Component of the proteasome core, a large protease complex with broad specificity involved in protein degradation. The polypeptide is Proteasome subunit beta 1 (Caldivirga maquilingensis (strain ATCC 700844 / DSM 13496 / JCM 10307 / IC-167)).